We begin with the raw amino-acid sequence, 241 residues long: Small ribosomal subunit protein uS2 (241 aa).

The protein belongs to the universal ribosomal protein uS2 family.

This is Small ribosomal subunit protein uS2 from Klebsiella pneumoniae (strain 342).